The following is a 1268-amino-acid chain: Vigilin (1268 aa).

Position 2 is an N-acetylserine (serine 2). A Phosphothreonine modification is found at threonine 8. Serine 11, serine 31, and serine 35 each carry phosphoserine. KH domains lie at 158–229 (PKEH…RLEV), 230–302 (EKAF…AVEV), 303–371 (KKSQ…SVAA), 372–442 (PSWL…EINI), 443–514 (DHKF…DLII), 515–588 (EQRF…SVPI), 589–660 (FKQF…EVSI), 661–734 (PAKL…DIRA), 735–807 (KPEY…SMLV), 808–880 (DPKH…ECAI), 881–979 (PQKF…EVEV), 980–1059 (PFDL…SVTV), 1060–1134 (DPKY…DVPL), and 1135–1209 (DHRV…ALQV). Residues threonine 295 and threonine 296 each carry the phosphothreonine modification. The residue at position 317 (serine 317) is a Phosphoserine. Position 437 is a phosphotyrosine (tyrosine 437). At serine 645 the chain carries Phosphoserine. The interval 914–944 (ENAVHSTEPVVQENGDEAGEGREAKDCDPGS) is disordered. The span at 932 to 944 (GEGREAKDCDPGS) shows a compositional bias: basic and acidic residues. Lysine 991 is subject to N6-acetyllysine. The interval 1233–1268 (WTASSSEKAPDMSSSEEFPSFGAQVAPKTLPWGPKR) is disordered. Residues 1234-1249 (TASSSEKAPDMSSSEE) show a composition bias toward polar residues. Residues serine 1247 and serine 1252 each carry the phosphoserine modification.

Its subcellular location is the cytoplasm. It is found in the nucleus. Appears to play a role in cell sterol metabolism. It may function to protect cells from over-accumulation of cholesterol. The protein is Vigilin (HDLBP) of Homo sapiens (Human).